A 146-amino-acid chain; its full sequence is D-aminoacyl-tRNA deacylase (146 aa).

Residues 137-138 (GP) carry the Gly-cisPro motif, important for rejection of L-amino acids motif.

The protein belongs to the DTD family. Homodimer.

Its subcellular location is the cytoplasm. The catalysed reaction is glycyl-tRNA(Ala) + H2O = tRNA(Ala) + glycine + H(+). It catalyses the reaction a D-aminoacyl-tRNA + H2O = a tRNA + a D-alpha-amino acid + H(+). Its function is as follows. An aminoacyl-tRNA editing enzyme that deacylates mischarged D-aminoacyl-tRNAs. Also deacylates mischarged glycyl-tRNA(Ala), protecting cells against glycine mischarging by AlaRS. Acts via tRNA-based rather than protein-based catalysis; rejects L-amino acids rather than detecting D-amino acids in the active site. By recycling D-aminoacyl-tRNA to D-amino acids and free tRNA molecules, this enzyme counteracts the toxicity associated with the formation of D-aminoacyl-tRNA entities in vivo and helps enforce protein L-homochirality. The protein is D-aminoacyl-tRNA deacylase of Bacillus cereus (strain Q1).